Reading from the N-terminus, the 241-residue chain is Uridylate kinase (241 aa).

15 to 18 provides a ligand contact to ATP; that stretch reads KLSG. The involved in allosteric activation by GTP stretch occupies residues 23-28; that stretch reads GSEGFG. Gly57 contributes to the UMP binding site. ATP-binding residues include Gly58 and Arg62. UMP is bound by residues Asp77 and 138–145; that span reads TGNPFFTT. ATP-binding residues include Thr165, Phe171, and Asp174.

It belongs to the UMP kinase family. In terms of assembly, homohexamer.

It localises to the cytoplasm. The catalysed reaction is UMP + ATP = UDP + ADP. The protein operates within pyrimidine metabolism; CTP biosynthesis via de novo pathway; UDP from UMP (UMPK route): step 1/1. Allosterically activated by GTP. Inhibited by UTP. Catalyzes the reversible phosphorylation of UMP to UDP. This is Uridylate kinase from Vibrio vulnificus (strain CMCP6).